Here is a 231-residue protein sequence, read N- to C-terminus: Eukaryotic translation initiation factor 4E allele A (231 aa).

The span at 1-20 shows a compositional bias: basic and acidic residues; that stretch reads MAAAEMERTTSFDAAEKLKA. Residues 1 to 36 form a disordered region; sequence MAAAEMERTTSFDAAEKLKAADAGGGEVDDELEEGE. Acidic residues predominate over residues 27–36; it reads EVDDELEEGE. EIF4G-binding regions lie at residues 56-59 and 66-102; these read HPLE and FDSPIAKSRQTAWGSSLRNVYTFSTVEDFWGAYNNIH. MRNA-binding positions include 74 to 79, Lys-106, and 124 to 125; these read RQTAWG and WE. A disulfide bond links Cys-129 and Cys-167. The interval 150–159 is EIF4G-binding; it reads YTLLAMIGHQ. Residues 174-179 and 219-223 contribute to the mRNA site; these read RSKGEK and KRLDR.

Belongs to the eukaryotic initiation factor 4E family. As to quaternary structure, EIF4F is a multi-subunit complex, the composition of which varies with external and internal environmental conditions. It is composed of at least EIF4A, EIF4E and EIF4G. EIF4E is also known to interact with other partners. In higher plants two isoforms of EIF4F have been identified, named isoform EIF4F and isoform EIF(iso)4F. Isoform EIF4F has subunits p220 and p26, whereas isoform EIF(iso)4F has subunits p82 and p28. (Microbial infection) Interacts with viral genome-linked protein (VPg); this interaction is possible in susceptible hosts but impaired in resistant plants. According to the redox status, the Cys-129-Cys-167 disulfide bridge may have a role in regulating protein function by affecting its ability to bind capped mRNA.

The protein localises to the nucleus. Its subcellular location is the cytoplasm. In terms of biological role, component of the protein complex eIF4F, which is involved in the recognition of the mRNA cap, ATP-dependent unwinding of 5'-terminal secondary structure and recruitment of mRNA to the ribosome. Recognizes and binds the 7-methylguanosine-containing mRNA cap during an early step in the initiation of protein synthesis and facilitates ribosome binding by inducing the unwinding of the mRNAs secondary structures. Key component of recessive resistance to potyviruses. Functionally, (Microbial infection) Susceptibility host factor required for viral infection (e.g. Potato virus Y (PVY)) by recruiting viral RNAs to the host ribosomal complex via an interaction with viral genome-linked protein (VPg). This chain is Eukaryotic translation initiation factor 4E allele A, found in Solanum tuberosum (Potato).